The sequence spans 149 residues: MGLENSLILFSLLVLVLGWVQPSLGKESSPDKFKRQHMDTEGSSKSSPTYCNQMRSPQEMTKGSCKPVNTFLHEPLEDVQAICSQDKVTCKDGKSNCHKSSSTLHITDCCLKGSSNYPKCNYTTTESQKHIIIACDGNPYVPVHFDASV.

The N-terminal stretch at 1–25 (MGLENSLILFSLLVLVLGWVQPSLG) is a signal peptide. The tract at residues 25 to 62 (GKESSPDKFKRQHMDTEGSSKSSPTYCNQMRSPQEMTK) is disordered. The segment covering 28–42 (SSPDKFKRQHMDTEG) has biased composition (basic and acidic residues). Substrate is bound by residues Lys32 and Arg35. The Proton acceptor role is filled by His37. Over residues 43-61 (SSKSSPTYCNQMRSPQEMT) the composition is skewed to polar residues. 4 cysteine pairs are disulfide-bonded: Cys51/Cys109, Cys65/Cys120, Cys83/Cys135, and Cys90/Cys97. Substrate contacts are provided by residues 66-70 (KPVNT) and Lys91. His144 acts as the Proton donor in catalysis.

It belongs to the pancreatic ribonuclease family. As to quaternary structure, monomer. Interacts with and forms tight 1:1 complexes with RNH1. Dimerization of two such complexes may occur. Interaction with RNH1 inhibits this protein.

It localises to the secreted. It carries out the reaction an [RNA] containing cytidine + H2O = an [RNA]-3'-cytidine-3'-phosphate + a 5'-hydroxy-ribonucleotide-3'-[RNA].. The catalysed reaction is an [RNA] containing uridine + H2O = an [RNA]-3'-uridine-3'-phosphate + a 5'-hydroxy-ribonucleotide-3'-[RNA].. In terms of biological role, endonuclease that catalyzes the cleavage of RNA on the 3' side of pyrimidine nucleotides. Acts on single-stranded and double-stranded RNA. This Sundamys muelleri (Mueller's giant sunda rat) protein is Ribonuclease pancreatic (RNASE1).